The chain runs to 338 residues: Glycerol-3-phosphate dehydrogenase [NAD(P)+] (338 aa).

S12, W13, and K110 together coordinate NADPH. Residues K110, G141, and S143 each contribute to the sn-glycerol 3-phosphate site. A145 is a binding site for NADPH. K196, D249, S259, R260, and N261 together coordinate sn-glycerol 3-phosphate. The active-site Proton acceptor is K196. Residue R260 participates in NADPH binding. NADPH is bound by residues V284 and E286.

The protein belongs to the NAD-dependent glycerol-3-phosphate dehydrogenase family.

Its subcellular location is the cytoplasm. The catalysed reaction is sn-glycerol 3-phosphate + NAD(+) = dihydroxyacetone phosphate + NADH + H(+). The enzyme catalyses sn-glycerol 3-phosphate + NADP(+) = dihydroxyacetone phosphate + NADPH + H(+). The protein operates within membrane lipid metabolism; glycerophospholipid metabolism. Functionally, catalyzes the reduction of the glycolytic intermediate dihydroxyacetone phosphate (DHAP) to sn-glycerol 3-phosphate (G3P), the key precursor for phospholipid synthesis. This Lactiplantibacillus plantarum (strain ATCC BAA-793 / NCIMB 8826 / WCFS1) (Lactobacillus plantarum) protein is Glycerol-3-phosphate dehydrogenase [NAD(P)+].